The following is a 259-amino-acid chain: Type III pantothenate kinase (259 aa).

Residue 6–13 participates in ATP binding; sequence DVGNTNIV. Residues Tyr100 and 107–110 contribute to the substrate site; that span reads GADR. Catalysis depends on Asp109, which acts as the Proton acceptor. A K(+)-binding site is contributed by Asp129. ATP is bound at residue Thr132. Thr184 lines the substrate pocket.

This sequence belongs to the type III pantothenate kinase family. Homodimer. NH4(+) is required as a cofactor. Requires K(+) as cofactor.

The protein localises to the cytoplasm. It catalyses the reaction (R)-pantothenate + ATP = (R)-4'-phosphopantothenate + ADP + H(+). It participates in cofactor biosynthesis; coenzyme A biosynthesis; CoA from (R)-pantothenate: step 1/5. In terms of biological role, catalyzes the phosphorylation of pantothenate (Pan), the first step in CoA biosynthesis. This Clostridium perfringens (strain 13 / Type A) protein is Type III pantothenate kinase.